The chain runs to 768 residues: UPF0313 protein VV1_2212 (768 aa).

One can recognise a Radical SAM core domain in the interval Ala363–Asp640. [4Fe-4S] cluster contacts are provided by Cys377, Cys381, and Cys384. A disordered region spans residues Asp674–Arg768. The segment covering Ala679–Ala689 has biased composition (basic residues). Residues Gly719–Ser731 show a composition bias toward polar residues.

Belongs to the UPF0313 family. [4Fe-4S] cluster is required as a cofactor.

The chain is UPF0313 protein VV1_2212 from Vibrio vulnificus (strain CMCP6).